A 576-amino-acid chain; its full sequence is A-type ATP synthase subunit A (576 aa).

Gly228–Thr235 provides a ligand contact to ATP.

This sequence belongs to the ATPase alpha/beta chains family. As to quaternary structure, has multiple subunits with at least A(3), B(3), C, D, E, F, H, I and proteolipid K(x).

It is found in the cell membrane. It catalyses the reaction ATP + H2O + 4 H(+)(in) = ADP + phosphate + 5 H(+)(out). Its function is as follows. Component of the A-type ATP synthase that produces ATP from ADP in the presence of a proton gradient across the membrane. The A chain is the catalytic subunit. This Methanothrix thermoacetophila (strain DSM 6194 / JCM 14653 / NBRC 101360 / PT) (Methanosaeta thermophila) protein is A-type ATP synthase subunit A.